The chain runs to 502 residues: Glycerol kinase (502 aa).

Thr-14 contributes to the ADP binding site. ATP contacts are provided by Thr-14, Thr-15, and Ser-16. Thr-14 serves as a coordination point for sn-glycerol 3-phosphate. Residue Arg-18 coordinates ADP. Residues Arg-84, Glu-85, and Tyr-136 each contribute to the sn-glycerol 3-phosphate site. Glycerol-binding residues include Arg-84, Glu-85, and Tyr-136. His-232 bears the Phosphohistidine; by HPr mark. Residue Asp-246 participates in sn-glycerol 3-phosphate binding. Glycerol is bound by residues Asp-246 and Gln-247. 2 residues coordinate ADP: Thr-268 and Gly-311. ATP contacts are provided by Thr-268, Gly-311, Gln-315, and Gly-412. 2 residues coordinate ADP: Gly-412 and Asn-416.

This sequence belongs to the FGGY kinase family. As to quaternary structure, homotetramer and homodimer (in equilibrium). The phosphoenolpyruvate-dependent sugar phosphotransferase system (PTS), including enzyme I, and histidine-containing protein (HPr) are required for the phosphorylation, which leads to the activation of the enzyme.

It catalyses the reaction glycerol + ATP = sn-glycerol 3-phosphate + ADP + H(+). Its pathway is polyol metabolism; glycerol degradation via glycerol kinase pathway; sn-glycerol 3-phosphate from glycerol: step 1/1. Activated by phosphorylation and inhibited by fructose 1,6-bisphosphate (FBP). In terms of biological role, key enzyme in the regulation of glycerol uptake and metabolism. Catalyzes the phosphorylation of glycerol to yield sn-glycerol 3-phosphate. The chain is Glycerol kinase from Streptococcus pneumoniae serotype 19F (strain G54).